Here is a 127-residue protein sequence, read N- to C-terminus: Large ribosomal subunit protein bL20 (127 aa).

The protein belongs to the bacterial ribosomal protein bL20 family.

Its function is as follows. Binds directly to 23S ribosomal RNA and is necessary for the in vitro assembly process of the 50S ribosomal subunit. It is not involved in the protein synthesizing functions of that subunit. In Bifidobacterium longum (strain NCC 2705), this protein is Large ribosomal subunit protein bL20.